Consider the following 268-residue polypeptide: Cell division cycle-associated protein 3 (268 aa).

Disordered stretches follow at residues methionine 1 to lysine 232 and glycine 247 to serine 268. A phosphoserine mark is found at serine 29 and serine 31. Phosphothreonine is present on threonine 37. Residues serine 44, serine 64, and serine 68 each carry the phosphoserine modification. Positions glutamate 56 to proline 66 are enriched in basic and acidic residues. Threonine 76 is subject to Phosphothreonine. Phosphoserine occurs at positions 87 and 94. Residues lysine 91–serine 120 form an F-box-like region. The segment covering proline 107–alanine 116 has biased composition (pro residues). Low complexity predominate over residues proline 117 to leucine 126. 3 stretches are compositionally biased toward polar residues: residues threonine 128 to valine 149, proline 158 to aspartate 169, and proline 178 to lysine 194. Phosphoserine is present on serine 199. Threonine 202 is subject to Phosphothreonine. A compositionally biased stretch (polar residues) spans glutamine 205 to leucine 215. A Phosphoserine modification is found at serine 209. Residue threonine 212 is modified to Phosphothreonine. The KEN box motif lies at lysine 258–asparagine 260.

Interacts with SKP1. Part of a SCF (SKP1-cullin-F-box) protein ligase complex. Post-translationally, ubiquitinated and degraded by the APC/C-Cdh1 complex.

It is found in the cytoplasm. The protein localises to the cytosol. The protein operates within protein modification; protein ubiquitination. In terms of biological role, F-box-like protein which is required for entry into mitosis. Acts by participating in E3 ligase complexes that mediate the ubiquitination and degradation of WEE1 kinase at G2/M phase. This Homo sapiens (Human) protein is Cell division cycle-associated protein 3 (CDCA3).